We begin with the raw amino-acid sequence, 76 residues long: Large ribosomal subunit protein uL29 (76 aa).

The protein belongs to the universal ribosomal protein uL29 family.

This Corynebacterium glutamicum (strain R) protein is Large ribosomal subunit protein uL29.